The chain runs to 185 residues: Regulatory protein RecX (185 aa).

This sequence belongs to the RecX family.

The protein resides in the cytoplasm. Its function is as follows. Modulates RecA activity. The protein is Regulatory protein RecX of Thermobifida fusca (strain YX).